The sequence spans 448 residues: GTPase Der (448 aa).

EngA-type G domains follow at residues proline 3–glutamate 167 and threonine 182–threonine 355. GTP-binding positions include glycine 9–serine 16, aspartate 56–phenylalanine 60, asparagine 119–glutamate 122, glycine 188–serine 195, aspartate 235–leucine 239, and asparagine 300–aspartate 303. The 85-residue stretch at arginine 356–histidine 440 folds into the KH-like domain.

This sequence belongs to the TRAFAC class TrmE-Era-EngA-EngB-Septin-like GTPase superfamily. EngA (Der) GTPase family. In terms of assembly, associates with the 50S ribosomal subunit.

Its function is as follows. GTPase that plays an essential role in the late steps of ribosome biogenesis. This chain is GTPase Der, found in Leptothrix cholodnii (strain ATCC 51168 / LMG 8142 / SP-6) (Leptothrix discophora (strain SP-6)).